A 171-amino-acid chain; its full sequence is Endoribonuclease YbeY (171 aa).

Zn(2+) is bound by residues histidine 130, histidine 134, and histidine 140.

The protein belongs to the endoribonuclease YbeY family. It depends on Zn(2+) as a cofactor.

The protein resides in the cytoplasm. In terms of biological role, single strand-specific metallo-endoribonuclease involved in late-stage 70S ribosome quality control and in maturation of the 3' terminus of the 16S rRNA. This is Endoribonuclease YbeY from Neisseria gonorrhoeae (strain ATCC 700825 / FA 1090).